A 278-amino-acid chain; its full sequence is Deoxyribonuclease-1-like 2 (278 aa).

The first 21 residues, 1 to 21 (MGWPWAPLTAVWALGVMGATA), serve as a signal peptide directing secretion. Catalysis depends on residues Glu99 and His150. The cysteines at positions 189 and 225 are disulfide-linked.

It belongs to the DNase I family. Requires Mg(2+) as cofactor. The cofactor is Ca(2+).

The protein resides in the cytoplasm. The protein localises to the secreted. Functionally, divalent cation-dependent acid DNA endonuclease involved in the breakdown of the nucleus during corneocyte formation of epidermal keratinocytes. May play an immune role by eliminating harmful DNA released into the extracellular environment by damaged epidermal cells. This is Deoxyribonuclease-1-like 2 (Dnase1l2) from Mus musculus (Mouse).